The following is a 1594-amino-acid chain: Mucin-like protein (1594 aa).

The Extracellular portion of the chain corresponds to 1–1530; the sequence is DTTAGPDTTS…YETREDGLEM (1530 aa). TSP type-1 domains follow at residues 141–196, 198–253, and 255–310; these read DGGF…GSCP, DGNF…PPCP, and DGNF…GPCP. 9 disulfides stabilise this stretch: C153–C190, C157–C195, C168–C180, C210–C247, C214–C252, C225–C237, C267–C304, C271–C309, and C282–C294. One can recognise an NIDO domain in the interval 400 to 566; sequence LTISDDAFEQ…GVWFFRLEMN (167 aa). In terms of domain architecture, AMOP spans 568 to 706; sequence ILSLAGKKCN…RSCFGYTLRR (139 aa). Residues 706-901 form the VWFD domain; the sequence is RRGLIFGDPH…KWQINASQSL (196 aa). EGF-like domains are found at residues 1063-1108 and 1110-1156; these read LILL…QYCQ and KIDA…SICE. 14 disulfide bridges follow: C1067-C1075, C1069-C1096, C1098-C1107, C1114-C1127, C1121-C1141, C1144-C1155, C1161-C1173, C1169-C1182, C1285-C1296, C1292-C1305, C1307-C1320, C1326-C1341, C1334-C1350, and C1352-C1363. Residues 1157-1191 enclose the EGF-like 3; calcium-binding domain; it reads DIDECSDANVSKCDHSCINLPGSYVCDCNQGFSLE. The 41-residue stretch at 1281–1321 folds into the EGF-like 4; calcium-binding domain; the sequence is DINECTTHRHKCSQICHNLDGSYTCSCQPGFNLSPDQTTCE. The EGF-like 5; calcium-binding domain occupies 1322-1364; that stretch reads DIDECGLINEAHCEGSLEICINTMGSFRCECQDGFHRVNDTCQ. The helical transmembrane segment at 1531-1551 threads the bilayer; it reads IWLLVGVSVAVAVPLMIVIVI. Over 1552 to 1593 the chain is Cytoplasmic; sequence LYREYRRIAKQRRKTNNFDLRQWSGARERTIYSGFTNSKSAR.

In terms of tissue distribution, component of the acid-insoluble and acid-soluble organic matrix of the aragonitic skeleton (at protein level).

Its subcellular location is the membrane. In Acropora millepora (Staghorn coral), this protein is Mucin-like protein.